The sequence spans 292 residues: Small ribosomal subunit protein uS9m (292 aa).

A disordered region spans residues V273–R292.

It belongs to the universal ribosomal protein uS9 family.

Its subcellular location is the mitochondrion. The chain is Small ribosomal subunit protein uS9m (MRPS9) from Kluyveromyces marxianus (Yeast).